We begin with the raw amino-acid sequence, 241 residues long: Uridylate kinase (241 aa).

15-18 (KLSG) serves as a coordination point for ATP. Residues 23-28 (GAEGFG) are involved in allosteric activation by GTP. Residue glycine 57 coordinates UMP. ATP is bound by residues glycine 58 and arginine 62. UMP contacts are provided by residues aspartate 77 and 138–145 (TGNPFFTT). Positions 165, 171, and 174 each coordinate ATP.

It belongs to the UMP kinase family. In terms of assembly, homohexamer.

It is found in the cytoplasm. The catalysed reaction is UMP + ATP = UDP + ADP. Its pathway is pyrimidine metabolism; CTP biosynthesis via de novo pathway; UDP from UMP (UMPK route): step 1/1. Allosterically activated by GTP. Inhibited by UTP. Functionally, catalyzes the reversible phosphorylation of UMP to UDP. The protein is Uridylate kinase of Sodalis glossinidius (strain morsitans).